Reading from the N-terminus, the 285-residue chain is Ribose-phosphate pyrophosphokinase (285 aa).

Residues 33 to 35 (DGE) and 91 to 92 (RQ) contribute to the ATP site. 2 residues coordinate Mg(2+): histidine 125 and aspartate 162. The active site involves lysine 185. D-ribose 5-phosphate contacts are provided by residues arginine 187, aspartate 211, and 215–219 (STGGT).

The protein belongs to the ribose-phosphate pyrophosphokinase family. Class III (archaeal) subfamily. Mg(2+) is required as a cofactor.

It localises to the cytoplasm. The enzyme catalyses D-ribose 5-phosphate + ATP = 5-phospho-alpha-D-ribose 1-diphosphate + AMP + H(+). Its pathway is metabolic intermediate biosynthesis; 5-phospho-alpha-D-ribose 1-diphosphate biosynthesis; 5-phospho-alpha-D-ribose 1-diphosphate from D-ribose 5-phosphate (route I): step 1/1. Functionally, involved in the biosynthesis of the central metabolite phospho-alpha-D-ribosyl-1-pyrophosphate (PRPP) via the transfer of pyrophosphoryl group from ATP to 1-hydroxyl of ribose-5-phosphate (Rib-5-P). This is Ribose-phosphate pyrophosphokinase from Methanothermobacter thermautotrophicus (strain ATCC 29096 / DSM 1053 / JCM 10044 / NBRC 100330 / Delta H) (Methanobacterium thermoautotrophicum).